The primary structure comprises 164 residues: Single-stranded DNA-binding protein 2 (164 aa).

Residues 5–109 enclose the SSB domain; the sequence is INKVILVGNL…IVADEMQMLG (105 aa). The interval 105-164 is disordered; the sequence is MQMLGGRSDGGGMGGGGERPQRQTSQRQDYAPRRQARQPSQSPQSSPPPMDDFADDDIPF. Residues 111-122 show a composition bias toward gly residues; that stretch reads RSDGGGMGGGGE. An Important for interaction with partner proteins motif is present at residues 159–164; sequence DDDIPF.

As to quaternary structure, homotetramer.

Its function is as follows. Plays an important role in DNA replication, recombination and repair. Binds to ssDNA and to an array of partner proteins to recruit them to their sites of action during DNA metabolism. This Xylella fastidiosa (strain 9a5c) protein is Single-stranded DNA-binding protein 2 (ssb2).